The primary structure comprises 611 residues: Rho GTPase-activating protein gacN (611 aa).

In terms of domain architecture, Rho-GAP spans 24–219 (KTFKKILKPG…VLIEEFHVLY (196 aa)). A coiled-coil region spans residues 236-499 (IREDKRSTSE…TKLQKSSSSS (264 aa)). Positions 476 to 491 (NQLEKEKSKLQDELTK) are enriched in basic and acidic residues. A disordered region spans residues 476–550 (NQLEKEKSKL…TTPPPPLDED (75 aa)). Low complexity-rich tracts occupy residues 495–509 (SSSSSSSSSSSSSSS) and 527–540 (TTTTTTTTSPAQQP).

It localises to the cytoplasm. In terms of biological role, rho GTPase-activating protein involved in the signal transduction pathway. The sequence is that of Rho GTPase-activating protein gacN (gacN) from Dictyostelium discoideum (Social amoeba).